The sequence spans 216 residues: Serine acetyltransferase (216 aa).

This sequence belongs to the transferase hexapeptide repeat family.

The protein resides in the cytoplasm. The catalysed reaction is L-serine + acetyl-CoA = O-acetyl-L-serine + CoA. The protein operates within amino-acid biosynthesis; L-cysteine biosynthesis; L-cysteine from L-serine: step 1/2. Its activity is regulated as follows. Inhibited by cysteine. Its function is as follows. Catalyzes the acetylation of serine by acetyl-CoA to produce O-acetylserine (OAS). The protein is Serine acetyltransferase of Bacillus licheniformis (strain ATCC 14580 / DSM 13 / JCM 2505 / CCUG 7422 / NBRC 12200 / NCIMB 9375 / NCTC 10341 / NRRL NRS-1264 / Gibson 46).